We begin with the raw amino-acid sequence, 288 residues long: Homoserine kinase (288 aa).

78–88 is an ATP binding site; it reads PLARGLGSSSS.

Belongs to the GHMP kinase family. Homoserine kinase subfamily.

The protein resides in the cytoplasm. It carries out the reaction L-homoserine + ATP = O-phospho-L-homoserine + ADP + H(+). The protein operates within amino-acid biosynthesis; L-threonine biosynthesis; L-threonine from L-aspartate: step 4/5. Catalyzes the ATP-dependent phosphorylation of L-homoserine to L-homoserine phosphate. This is Homoserine kinase from Streptococcus agalactiae serotype III (strain NEM316).